Consider the following 468-residue polypeptide: Beta-monoglucosyldiacylglycerol synthase (468 aa).

The next 4 membrane-spanning stretches (helical) occupy residues 51–71 (AALV…VSWG), 72–92 (SIFI…VVFA), 358–378 (MLMF…DLLM), and 387–407 (MLGP…FAGL).

It belongs to the glycosyltransferase 2 family. Mg(2+) is required as a cofactor.

The protein resides in the membrane. It catalyses the reaction a 1,2-diacyl-sn-glycerol + UDP-alpha-D-glucose = a 1,2-diacyl-3-O-(beta-D-glucopyranosyl)-sn-glycerol + UDP + H(+). Glucosyltransferase involved in the biosynthesis of the non-bilayer-forming membrane lipid beta-monoglucosyldiacylglycerol which contributes to regulate the properties and stability of the membrane. Catalyzes the transfer of a glucosyl residue from UDP-Glc to diacylglycerol (DAG) acceptor to form the corresponding beta-glucosyl-DAG (1,2-diacyl-3-O-(beta-D-glucopyranosyl)-sn-glycerol). It can only use UDP-Glc as sugar donor. Two types of DAG (dipalmitoyl-DAG (DPDAG) and 1-oleoyl-2-palmitoyl-DAG (OPDAG)) can be used as sugar acceptors, but OPDAG is preferred. The sequence is that of Beta-monoglucosyldiacylglycerol synthase from Nostoc sp. (strain PCC 7120 / SAG 25.82 / UTEX 2576).